The following is a 1381-amino-acid chain: Contactin-associated protein 1 (1381 aa).

The first 20 residues, 1-20 (MMSLRLFSILLAAVVSGAQG), serve as a signal peptide directing secretion. Over 21 to 1284 (WGYYGCNEEL…PYYHDDGWIA (1264 aa)) the chain is Extracellular. Residues 26–169 (CNEELVGPLY…IGLRLGIYGC (144 aa)) form the F5/8 type C domain. Cysteine 26 and cysteine 169 form a disulfide bridge. N-linked (GlcNAc...) asparagine glycans are attached at residues asparagine 121, asparagine 129, and asparagine 277. 2 Laminin G-like domains span residues 204 to 356 (FKTE…AFRC) and 390 to 539 (FRTW…FDTC). Cysteine 324 and cysteine 356 form a disulfide bridge. 3 N-linked (GlcNAc...) asparagine glycosylation sites follow: asparagine 421, asparagine 500, and asparagine 519. 4 cysteine pairs are disulfide-bonded: cysteine 507–cysteine 539, cysteine 545–cysteine 556, cysteine 550–cysteine 565, and cysteine 567–cysteine 577. In terms of domain architecture, EGF-like 1 spans 544-576 (RCSPNMCEHDGRCYQSWDDFICYCELTGYKGVT). In terms of domain architecture, Fibrinogen C-terminal spans 577–796 (CHEPLYKESC…NTISFRTGAA (220 aa)). Residues asparagine 598, asparagine 654, asparagine 665, asparagine 764, asparagine 805, asparagine 844, asparagine 861, asparagine 949, and asparagine 957 are each glycosylated (N-linked (GlcNAc...) asparagine). Residues 814-958 (FRTSAPSGVF…NASEGTFPNC (145 aa)) form the Laminin G-like 3 domain. 4 cysteine pairs are disulfide-bonded: cysteine 931/cysteine 958, cysteine 962/cysteine 975, cysteine 969/cysteine 984, and cysteine 986/cysteine 996. One can recognise an EGF-like 2 domain in the interval 962–996 (CTHPRFPCFHGGRCVERYSYYTCDCDLTAFDGPYC). Residues asparagine 1079 and asparagine 1148 are each glycosylated (N-linked (GlcNAc...) asparagine). The 163-residue stretch at 1089-1251 (FSTSSAPAVL…VQGELSESNC (163 aa)) folds into the Laminin G-like 4 domain. Cysteines 1210 and 1251 form a disulfide. A helical membrane pass occupies residues 1285-1305 (ILLGFLVAFLLLGLVGMLVLF). The Cytoplasmic portion of the chain corresponds to 1306 to 1381 (YLQNHRYKGS…PQILEESRSE (76 aa)). The interval 1317–1381 (HTNEPKATHD…PQILEESRSE (65 aa)) is disordered. Residues 1319-1329 (NEPKATHDSHP) show a composition bias toward basic and acidic residues. The SH3-binding motif lies at 1329 to 1366 (PGGKAPLPPSGPAQAPAPTPAPTQVPTPAPAPASGPGP). Residues 1334–1363 (PLPPSGPAQAPAPTPAPTQVPTPAPAPASG) show a composition bias toward pro residues. Serine 1380 bears the Phosphoserine mark.

It belongs to the neurexin family. Interacts with CNTN1/contactin in cis form. Predominantly expressed in brain. In myelinated nerve fibers of the CNS predominantly found in paranodal axoglial junctions. In unmyelinated nerve fibers of the CNS diffusely distributed along the entire surface. Weak expression is detected in ovary, pancreas, colon, lung, heart, intestine and testis.

It is found in the membrane. Its subcellular location is the cell junction. The protein localises to the paranodal septate junction. Its function is as follows. Required, with CNTNAP2, for radial and longitudinal organization of myelinated axons. Plays a role in the formation of functional distinct domains critical for saltatory conduction of nerve impulses in myelinated nerve fibers. Demarcates the paranodal region of the axo-glial junction. In association with contactin involved in the signaling between axons and myelinating glial cells. This chain is Contactin-associated protein 1 (Cntnap1), found in Rattus norvegicus (Rat).